Consider the following 208-residue polypeptide: Uracil phosphoribosyltransferase (208 aa).

5-phospho-alpha-D-ribose 1-diphosphate is bound by residues Arg78, Arg103, and 130–138; that span reads DPMLATGGS. Uracil contacts are provided by residues Ile193 and 198–200; that span reads GDA. Position 199 (Asp199) interacts with 5-phospho-alpha-D-ribose 1-diphosphate.

This sequence belongs to the UPRTase family. It depends on Mg(2+) as a cofactor.

It catalyses the reaction UMP + diphosphate = 5-phospho-alpha-D-ribose 1-diphosphate + uracil. It functions in the pathway pyrimidine metabolism; UMP biosynthesis via salvage pathway; UMP from uracil: step 1/1. Allosterically activated by GTP. Its function is as follows. Catalyzes the conversion of uracil and 5-phospho-alpha-D-ribose 1-diphosphate (PRPP) to UMP and diphosphate. This is Uracil phosphoribosyltransferase from Actinobacillus succinogenes (strain ATCC 55618 / DSM 22257 / CCUG 43843 / 130Z).